Consider the following 478-residue polypeptide: MKNIYNTYDVINKSGINFGTSGARGLVTDFTPEVCARFTISFLTVMQQRFSFTTVALAIDNRPSSYAMAQACAAALQEKGIKTVYYGVIPTPALAHQSISDKVPAIMVTGSHIPFDRNGLKFYRPDGEITKDDENAIIHVDASFMQPKLEQLTISTIAARNYILRYTSLFPMPFLKNKRIGIYEHSSAGRDLYKTLFKMLGATVVSLARSDEFVPIDTEAVSEDDRNKAITWAKKYQLDAIFSTDGDGDRPLIADEYGNWLRGDILGLLCSLELAADAVAIPVSCNSTISSGNFFKHVERTKIGSPYVIAAFAKLSANYNCIAGFEANGGFLLGSDVYINQRLLKALPTRDALLPAIMLLFGSKDKSISELVKKLPARYTYSNRLQDISVKTSMSLINLGLTDQEDFLQYIGFNKHHILHSDVTDGFRITIDNNNIIHLRPSGNAPELRCYAEADSQEDACNIVETVLSNIKSKLGRA.

Residues Phe30–Met46 traverse the membrane as a helical segment. Ser111 serves as the catalytic Phosphoserine intermediate. Ser111, Asp245, Asp247, and Asp249 together coordinate Mg(2+). A helical membrane pass occupies residues Ile265–Ser284.

The protein belongs to the phosphohexose mutase family. The cofactor is Mg(2+).

It is found in the cell membrane. The enzyme catalyses alpha-D-mannose 1-phosphate = D-mannose 6-phosphate. The protein operates within nucleotide-sugar biosynthesis; GDP-alpha-D-mannose biosynthesis; alpha-D-mannose 1-phosphate from D-fructose 6-phosphate: step 2/2. Its pathway is bacterial outer membrane biogenesis; LPS O-antigen biosynthesis. In terms of biological role, involved in GDP-mannose biosynthesis which serves as the activated sugar nucleotide precursor for mannose residues in cell surface polysaccharides. This enzyme participates in synthesis of the LPS group C2 O antigen. The chain is Phosphomannomutase (manB) from Salmonella muenchen.